A 442-amino-acid polypeptide reads, in one-letter code: Proline--tRNA ligase (442 aa).

It belongs to the class-II aminoacyl-tRNA synthetase family. ProS type 2 subfamily. Homodimer.

It is found in the cytoplasm. It catalyses the reaction tRNA(Pro) + L-proline + ATP = L-prolyl-tRNA(Pro) + AMP + diphosphate. Catalyzes the attachment of proline to tRNA(Pro) in a two-step reaction: proline is first activated by ATP to form Pro-AMP and then transferred to the acceptor end of tRNA(Pro). The protein is Proline--tRNA ligase of Brucella suis (strain ATCC 23445 / NCTC 10510).